A 440-amino-acid polypeptide reads, in one-letter code: Chromosome partition protein MukF (440 aa).

The interval 208–236 (LSETSGTLRELQDTLEAAGDKLQANLLRI) is leucine-zipper.

It belongs to the MukF family. Interacts, and probably forms a ternary complex, with MukE and MukB via its C-terminal region. The complex formation is stimulated by calcium or magnesium. It is required for an interaction between MukE and MukB.

It localises to the cytoplasm. Its subcellular location is the nucleoid. Its function is as follows. Involved in chromosome condensation, segregation and cell cycle progression. May participate in facilitating chromosome segregation by condensation DNA from both sides of a centrally located replisome during cell division. Not required for mini-F plasmid partitioning. Probably acts via its interaction with MukB and MukE. Overexpression results in anucleate cells. It has a calcium binding activity. This chain is Chromosome partition protein MukF, found in Salmonella typhi.